The primary structure comprises 297 residues: Myoblast determination protein 1 homolog (297 aa).

A disordered region spans residues 52–76 (KPEEHPHHHGHHHGHPHEEEHVRAP). Positions 101–152 (DRRKAATMRERRRLSKVNEAFETLKRCTSTNPNQRLPKVEILRNAIRYIESL) constitute a bHLH domain. Disordered stretches follow at residues 171–221 (SGES…GKSS) and 243–297 (CPIL…YQVL). Composition is skewed to polar residues over residues 174-184 (SDASSPRSNCS) and 258-297 (CSPQ…YQVL).

As to quaternary structure, efficient DNA binding requires dimerization with another bHLH protein. Seems to form active heterodimers with ITF-2.

The protein resides in the nucleus. In terms of biological role, acts as a transcriptional activator that promotes transcription of muscle-specific target genes and plays a role in muscle differentiation. Induces fibroblasts to differentiate into myoblasts. Interacts with and is inhibited by the twist protein. This interaction probably involves the basic domains of both proteins. This is Myoblast determination protein 1 homolog (MYOD1) from Coturnix japonica (Japanese quail).